Reading from the N-terminus, the 1639-residue chain is RIMS-binding protein 3B (1639 aa).

3 disordered regions span residues 1-22, 215-240, and 295-364; these read MAKD…SSPA, GSPD…CHAP, and SLDS…LTPS. A coiled-coil region spans residues 21-143; the sequence is PAAAVLENQR…ELQRQLAEEL (123 aa). Over residues 326 to 339 the composition is skewed to pro residues; sequence SPPPSPLPPPPPPS. Coiled coils occupy residues 409–442 and 480–619; these read QADE…QETN and LAKD…AEEN. Residues 697-811 are disordered; it reads CRPGHPPEQP…DRDTASEVDD (115 aa). Polar residues-rich tracts occupy residues 707–718 and 761–775; these read WETSQMPESQVK and SVPQ…SQPL. Low complexity predominate over residues 776 to 790; the sequence is SKKTSSQSNSSSEGS. An SH3 1 domain is found at 832–899; sequence PKLKIFMAQY…PSNFVEQIPD (68 aa). Fibronectin type-III domains lie at 995–1083 and 1088–1184; these read APMQ…TLLA and PPLE…IPED. Disordered regions lie at residues 1251-1273, 1292-1325, and 1392-1413; these read PRRQ…GAGS, QKSP…SPAP, and GTER…QALG. Residues 1293-1305 are compositionally biased toward polar residues; sequence KSPQNHRPPSVSD. Residues 1392-1406 are compositionally biased toward basic and acidic residues; sequence GTERREERREPEPHS. SH3 domains are found at residues 1452-1520 and 1569-1636; these read TPAR…EMEV and WTPK…HMSL.

The protein belongs to the RIMBP family. As to quaternary structure, interacts with LRGUK (via guanylate kinase-like domain). Interacts (via C-terminus) with HOOK1 (via coiled-coil region).

Its subcellular location is the cytoplasm. It localises to the cytoskeleton. Probable component of the manchette, a microtubule-based structure which plays a key role in sperm head morphogenesis during late stages of sperm development. The protein is RIMS-binding protein 3B (RIMBP3B) of Homo sapiens (Human).